A 257-amino-acid polypeptide reads, in one-letter code: Flap endonuclease Xni (257 aa).

D109 contributes to the Mg(2+) binding site. One can recognise a 5'-3' exonuclease domain in the interval 165–255 (LKPEQLADYW…FNLQDIRYEK (91 aa)). Residues L176, A177, I187, and I190 each coordinate K(+). Residues 189–194 (GIGPKA) form an interaction with DNA region.

Belongs to the Xni family. Requires Mg(2+) as cofactor. It depends on K(+) as a cofactor.

In terms of biological role, has flap endonuclease activity. During DNA replication, flap endonucleases cleave the 5'-overhanging flap structure that is generated by displacement synthesis when DNA polymerase encounters the 5'-end of a downstream Okazaki fragment. This is Flap endonuclease Xni from Aliivibrio salmonicida (strain LFI1238) (Vibrio salmonicida (strain LFI1238)).